The following is a 103-amino-acid chain: N(4)-acetylcytidine amidohydrolase (103 aa).

The ASCH domain occupies 6-100; sequence ITFFQRFQND…NQMQFYVIDF (95 aa). The Proton acceptor role is filled by lysine 21. Catalysis depends on threonine 24, which acts as the Nucleophile. Glutamate 74 (proton donor) is an active-site residue.

The protein belongs to the N(4)-acetylcytidine amidohydrolase family.

The enzyme catalyses N(4)-acetylcytidine + H2O = cytidine + acetate + H(+). It carries out the reaction N(4)-acetyl-2'-deoxycytidine + H2O = 2'-deoxycytidine + acetate + H(+). It catalyses the reaction N(4)-acetylcytosine + H2O = cytosine + acetate + H(+). Its function is as follows. Catalyzes the hydrolysis of N(4)-acetylcytidine (ac4C). In Salmonella arizonae (strain ATCC BAA-731 / CDC346-86 / RSK2980), this protein is N(4)-acetylcytidine amidohydrolase (yqfB).